A 130-amino-acid polypeptide reads, in one-letter code: Protein ApaG (130 aa).

Residues 3-127 (KAETRGISVT…FSLDVPHVRR (125 aa)) form the ApaG domain.

The chain is Protein ApaG from Methylobacterium sp. (strain 4-46).